We begin with the raw amino-acid sequence, 382 residues long: Histidinol-phosphate aminotransferase (382 aa).

Residue lysine 215 is modified to N6-(pyridoxal phosphate)lysine. Residues 363–382 (NIDNQNKTYSQTSSIRKGTI) are disordered.

This sequence belongs to the class-II pyridoxal-phosphate-dependent aminotransferase family. Histidinol-phosphate aminotransferase subfamily. Homodimer. It depends on pyridoxal 5'-phosphate as a cofactor.

It catalyses the reaction L-histidinol phosphate + 2-oxoglutarate = 3-(imidazol-4-yl)-2-oxopropyl phosphate + L-glutamate. The protein operates within amino-acid biosynthesis; L-histidine biosynthesis; L-histidine from 5-phospho-alpha-D-ribose 1-diphosphate: step 7/9. The sequence is that of Histidinol-phosphate aminotransferase from Yersinia pestis bv. Antiqua (strain Antiqua).